The following is a 485-amino-acid chain: NADH-quinone oxidoreductase subunit N (485 aa).

A run of 14 helical transmembrane segments spans residues 8 to 28 (LIAL…MLSI), 35 to 55 (FLNA…LWFV), 71 to 91 (GFAM…CTFA), 105 to 125 (FYLL…ANHL), 127 to 147 (ALFL…GYAF), 159 to 179 (YTIL…LVYA), 203 to 223 (LLAG…LVPF), 235 to 255 (PAPV…GVVM), 271 to 291 (VVLG…ALSQ), 297 to 317 (LLGY…IALQ), 326 to 346 (VGVY…VVSL), 373 to 393 (AAVM…LGFI), 408 to 430 (WWLV…RVAV), and 455 to 475 (IVVL…QPLI).

Belongs to the complex I subunit 2 family. NDH-1 is composed of 13 different subunits. Subunits NuoA, H, J, K, L, M, N constitute the membrane sector of the complex.

The protein localises to the cell inner membrane. It catalyses the reaction a quinone + NADH + 5 H(+)(in) = a quinol + NAD(+) + 4 H(+)(out). NDH-1 shuttles electrons from NADH, via FMN and iron-sulfur (Fe-S) centers, to quinones in the respiratory chain. The immediate electron acceptor for the enzyme in this species is believed to be ubiquinone. Couples the redox reaction to proton translocation (for every two electrons transferred, four hydrogen ions are translocated across the cytoplasmic membrane), and thus conserves the redox energy in a proton gradient. The protein is NADH-quinone oxidoreductase subunit N of Salmonella dublin (strain CT_02021853).